The primary structure comprises 547 residues: 2-succinyl-5-enolpyruvyl-6-hydroxy-3-cyclohexene-1-carboxylate synthase (547 aa).

This sequence belongs to the TPP enzyme family. MenD subfamily. In terms of assembly, homodimer. Mg(2+) is required as a cofactor. It depends on Mn(2+) as a cofactor. Thiamine diphosphate serves as cofactor.

The catalysed reaction is isochorismate + 2-oxoglutarate + H(+) = 5-enolpyruvoyl-6-hydroxy-2-succinyl-cyclohex-3-ene-1-carboxylate + CO2. Its pathway is quinol/quinone metabolism; 1,4-dihydroxy-2-naphthoate biosynthesis; 1,4-dihydroxy-2-naphthoate from chorismate: step 2/7. It participates in quinol/quinone metabolism; menaquinone biosynthesis. Its function is as follows. Catalyzes the thiamine diphosphate-dependent decarboxylation of 2-oxoglutarate and the subsequent addition of the resulting succinic semialdehyde-thiamine pyrophosphate anion to isochorismate to yield 2-succinyl-5-enolpyruvyl-6-hydroxy-3-cyclohexene-1-carboxylate (SEPHCHC). The sequence is that of 2-succinyl-5-enolpyruvyl-6-hydroxy-3-cyclohexene-1-carboxylate synthase from Mycobacterium sp. (strain KMS).